A 102-amino-acid polypeptide reads, in one-letter code: Small ribosomal subunit protein uS10 (102 aa).

Belongs to the universal ribosomal protein uS10 family. Part of the 30S ribosomal subunit.

In terms of biological role, involved in the binding of tRNA to the ribosomes. The sequence is that of Small ribosomal subunit protein uS10 from Exiguobacterium sibiricum (strain DSM 17290 / CCUG 55495 / CIP 109462 / JCM 13490 / 255-15).